The following is a 102-amino-acid chain: Small ribosomal subunit protein uS10 (102 aa).

The protein belongs to the universal ribosomal protein uS10 family. In terms of assembly, part of the 30S ribosomal subunit.

Involved in the binding of tRNA to the ribosomes. In Mycoplasma capricolum subsp. capricolum (strain California kid / ATCC 27343 / NCTC 10154), this protein is Small ribosomal subunit protein uS10.